Reading from the N-terminus, the 63-residue chain is Alpha-conotoxin-like Sm1.3 (63 aa).

The signal sequence occupies residues 1 to 16 (MFTVFLLVVLATTVVS). A propeptide spanning residues 17 to 43 (SPSDRASDGRNAAANEKASDVIALALK) is cleaved from the precursor. 2 disulfides stabilise this stretch: C45–C51 and C46–C59. Residue M58 is modified to Methionine sulfoxide; partial. C59 is subject to Cysteine amide; partial.

It belongs to the conotoxin A superfamily. In terms of tissue distribution, expressed by the venom duct.

Its subcellular location is the secreted. Alpha-conotoxins act on postsynaptic membranes, they bind to the nicotinic acetylcholine receptors (nAChR) and thus inhibit them. The polypeptide is Alpha-conotoxin-like Sm1.3 (Conus stercusmuscarum (Fly-specked cone)).